We begin with the raw amino-acid sequence, 418 residues long: Beta-2 adrenergic receptor (418 aa).

Topologically, residues 1 to 34 are extracellular; that stretch reads MGQPGNRSVFLLAPNGSHAPDQDVPQERDEAWVV. N-linked (GlcNAc...) asparagine glycosylation is found at Asn-6 and Asn-15. Residues 35 to 58 form a helical membrane-spanning segment; that stretch reads GMAIVMSLIVLAIVFGNVLVITAI. Topologically, residues 59–71 are cytoplasmic; it reads AKFERLQTVTNYF. Residues 72–95 form a helical membrane-spanning segment; it reads ITSLACADLVMGLAVVPFGASHIL. Residues 96 to 106 are Extracellular-facing; sequence MKMWTFGSFWC. Disulfide bonds link Cys-106-Cys-191 and Cys-184-Cys-190. Residues 107-129 traverse the membrane as a helical segment; the sequence is EFWISIDVLCVTASIETLCVIAV. Over 130–150 the chain is Cytoplasmic; it reads DRYLAITSPFKYQCLLTKNKA. At Tyr-141 the chain carries Phosphotyrosine. A helical transmembrane segment spans residues 151–174; that stretch reads RVVILMVWVVSGLISFLPIKMHWY. At 175-196 the chain is on the extracellular side; sequence QATHREALNCYAEEACCDFFTN. A helical membrane pass occupies residues 197–220; it reads QPYAIASSIVSFYLPLVVMVFVYS. Residues 221-274 lie on the Cytoplasmic side of the membrane; it reads RVFQVARRQLQKIDKSEGRFHAQNLSQAEQDGRSGPGHRRSSKFCLKEHKALKT. Ser-246 bears the Phosphoserine mark. Phosphoserine; by PKA occurs at positions 261 and 262. A lipid anchor (S-palmitoyl cysteine) is attached at Cys-265. The helical transmembrane segment at 275–298 threads the bilayer; that stretch reads LGIIMGTFTLCWLPFFIVNIVHGI. Topologically, residues 299–305 are extracellular; sequence HDNLIPK. Residues 306–329 form a helical membrane-spanning segment; that stretch reads EVYILLNWVGYVNSAFNPLIYCRS. The Cytoplasmic portion of the chain corresponds to 330 to 418; that stretch reads PDFRMAFQEL…RNCSTNDSML (89 aa). Cys-341 carries S-palmitoyl cysteine lipidation. A phosphoserine; by PKA mark is found at Ser-345 and Ser-346. Residues Ser-355 and Ser-356 each carry the phosphoserine; by BARK modification. A disordered region spans residues 381-418; that stretch reads RLCEDAPGPEGCAHRQGTVPDDSTDSQGRNCSTNDSML. 4-hydroxyproline is present on residues Pro-387 and Pro-400. Positions 405–418 are enriched in polar residues; the sequence is DSQGRNCSTNDSML. The short motif at 415–418 is the PDZ-binding element; the sequence is DSML.

Belongs to the G-protein coupled receptor 1 family. Adrenergic receptor subfamily. ADRB2 sub-subfamily. Binds NHERF1 and GPRASP1. Interacts with ARRB1 and ARRB2. Interacts with SRC. Interacts with USP20 and USP33. Interacts with VHL; the interaction, which is increased on hydroxylation of ADRB2, ubiquitinates ADRB2 leading to its degradation. Interacts with EGLN3; the interaction hydroxylates ADRB2 facilitating VHL-E3 ligase-mediated ubiquitination. Interacts (via PDZ-binding motif) with SNX27 (via PDZ domain); the interaction is required when endocytosed to prevent degradation in lysosomes and promote recycling to the plasma membrane. Interacts with CNIH4. Interacts with ARRDC3. Interacts with NEDD4. Interacts with MARCHF2. In terms of processing, palmitoylated; may reduce accessibility of Ser-345 and Ser-346 by anchoring Cys-341 to the plasma membrane. Agonist stimulation promotes depalmitoylation and further allows Ser-345 and Ser-346 phosphorylation. Post-translationally, phosphorylated by PKA and BARK upon agonist stimulation, which mediates homologous desensitization of the receptor. PKA-mediated phosphorylation seems to facilitate phosphorylation by BARK. Phosphorylation of Tyr-141 is induced by insulin and leads to supersensitization of the receptor. In terms of processing, polyubiquitinated. Agonist-induced ubiquitination leads to sort internalized receptors to the lysosomes for degradation. Deubiquitination by USP20 and USP33, leads to ADRB2 recycling and resensitization after prolonged agonist stimulation. USP20 and USP33 are constitutively associated and are dissociated immediately after agonist stimulation. Ubiquitination by the VHL-E3 ligase complex is oxygen-dependent. Post-translationally, hydroxylation by EGLN3 occurs only under normoxia and increases the interaction with VHL and the subsequent ubiquitination and degradation of ADRB2. Palmitoylated. Mainly palmitoylated at Cys-341. Palmitoylation may reduce accessibility of phosphorylation sites by anchoring the receptor to the plasma membrane. Agonist stimulation promotes depalmitoylation and further allows Ser-345 and Ser-346 phosphorylation. Also undergoes transient, ligand-induced palmitoylation at Cys-265 probably by ZDHHC9, ZDHHC14 and ZDHHC18 within the Golgi. Palmitoylation at Cys-265 requires phosphorylation by PKA and receptor internalization and stabilizes the receptor. Could be depalmitoylated by LYPLA1 at the plasma membrane. Expressed in heart, liver, lung, skeletal muscle and subcutaneous adipose tissue.

It localises to the cell membrane. The protein localises to the early endosome. Its subcellular location is the golgi apparatus. Functionally, beta-adrenergic receptors mediate the catecholamine-induced activation of adenylate cyclase through the action of G proteins. The beta-2-adrenergic receptor binds epinephrine with an approximately 30-fold greater affinity than it does norepinephrine. The polypeptide is Beta-2 adrenergic receptor (ADRB2) (Sus scrofa (Pig)).